We begin with the raw amino-acid sequence, 319 residues long: Methionyl-tRNA formyltransferase (319 aa).

113 to 116 (SLLP) provides a ligand contact to (6S)-5,6,7,8-tetrahydrofolate.

The protein belongs to the Fmt family.

The catalysed reaction is L-methionyl-tRNA(fMet) + (6R)-10-formyltetrahydrofolate = N-formyl-L-methionyl-tRNA(fMet) + (6S)-5,6,7,8-tetrahydrofolate + H(+). Functionally, attaches a formyl group to the free amino group of methionyl-tRNA(fMet). The formyl group appears to play a dual role in the initiator identity of N-formylmethionyl-tRNA by promoting its recognition by IF2 and preventing the misappropriation of this tRNA by the elongation apparatus. This is Methionyl-tRNA formyltransferase from Pseudomonas fluorescens (strain ATCC BAA-477 / NRRL B-23932 / Pf-5).